Here is a 273-residue protein sequence, read N- to C-terminus: GDNF family receptor alpha-4 (273 aa).

Asn-192 carries an N-linked (GlcNAc...) asparagine glycan. Asn-250 carries GPI-anchor amidated asparagine lipidation. Positions 251-273 are cleaved as a propeptide — removed in mature form; that stretch reads AGCCFLWVSSMSILTALALQALL.

It belongs to the GDNFR family. In terms of assembly, interacts with ARTN ligand and RET: forms a 2:2:2 ternary complex composed of ARTN ligand, GFRA3 and RET receptor. Interacts with SORL1. In terms of tissue distribution, weakly expressed in heart, brain and testis.

The protein localises to the cell membrane. It is found in the secreted. Functionally, receptor for persephin (PSPN), a growth factor that exhibits neurotrophic activity on mesencephalic dopaminergic and motor neurons. Acts by binding to its coreceptor, GFRA4, leading to autophosphorylation and activation of the RET receptor. May be important in C-cell development and, in the postnatal development of the adrenal medulla. The polypeptide is GDNF family receptor alpha-4 (Gfra4) (Rattus norvegicus (Rat)).